The primary structure comprises 440 residues: Chromosome partition protein MukF (440 aa).

Residues 208 to 236 (LSETSGTLRELQDTLEAAGDKLQANLLRI) are leucine-zipper.

The protein belongs to the MukF family. As to quaternary structure, interacts, and probably forms a ternary complex, with MukE and MukB via its C-terminal region. The complex formation is stimulated by calcium or magnesium. It is required for an interaction between MukE and MukB.

The protein localises to the cytoplasm. The protein resides in the nucleoid. Involved in chromosome condensation, segregation and cell cycle progression. May participate in facilitating chromosome segregation by condensation DNA from both sides of a centrally located replisome during cell division. Not required for mini-F plasmid partitioning. Probably acts via its interaction with MukB and MukE. Overexpression results in anucleate cells. It has a calcium binding activity. This chain is Chromosome partition protein MukF, found in Yersinia enterocolitica serotype O:8 / biotype 1B (strain NCTC 13174 / 8081).